We begin with the raw amino-acid sequence, 464 residues long: Glycine--tRNA ligase (464 aa).

Positions 104 and 175 each coordinate substrate. Residues 207-209 (RNE), 217-222 (FRTREF), 292-293 (EL), and 336-339 (GVNR) contribute to the ATP site. A substrate-binding site is contributed by 222–226 (FEQME). 332 to 336 (EPALG) contributes to the substrate binding site.

The protein belongs to the class-II aminoacyl-tRNA synthetase family. In terms of assembly, homodimer.

Its subcellular location is the cytoplasm. The catalysed reaction is tRNA(Gly) + glycine + ATP = glycyl-tRNA(Gly) + AMP + diphosphate. Functionally, catalyzes the attachment of glycine to tRNA(Gly). In Leptospira interrogans serogroup Icterohaemorrhagiae serovar Lai (strain 56601), this protein is Glycine--tRNA ligase.